The chain runs to 343 residues: Holliday junction branch migration complex subunit RuvB (343 aa).

The large ATPase domain (RuvB-L) stretch occupies residues 1 to 181 (MDRIIDSAAT…FGIVQRLEFY (181 aa)). Residues isoleucine 20, arginine 21, glycine 62, lysine 65, threonine 66, threonine 67, 128 to 130 (EDF), arginine 171, tyrosine 181, and arginine 218 contribute to the ATP site. Mg(2+) is bound at residue threonine 66. Residues 182–252 (SPEDLARIVR…VAQAAMQMLK (71 aa)) are small ATPAse domain (RuvB-S). Residues 255–343 (QGGFDELDRR…SAFTDPEDLF (89 aa)) form a head domain (RuvB-H) region. Residues arginine 291, arginine 310, and arginine 315 each coordinate DNA.

Belongs to the RuvB family. In terms of assembly, homohexamer. Forms an RuvA(8)-RuvB(12)-Holliday junction (HJ) complex. HJ DNA is sandwiched between 2 RuvA tetramers; dsDNA enters through RuvA and exits via RuvB. An RuvB hexamer assembles on each DNA strand where it exits the tetramer. Each RuvB hexamer is contacted by two RuvA subunits (via domain III) on 2 adjacent RuvB subunits; this complex drives branch migration. In the full resolvosome a probable DNA-RuvA(4)-RuvB(12)-RuvC(2) complex forms which resolves the HJ.

The protein localises to the cytoplasm. The catalysed reaction is ATP + H2O = ADP + phosphate + H(+). Its function is as follows. The RuvA-RuvB-RuvC complex processes Holliday junction (HJ) DNA during genetic recombination and DNA repair, while the RuvA-RuvB complex plays an important role in the rescue of blocked DNA replication forks via replication fork reversal (RFR). RuvA specifically binds to HJ cruciform DNA, conferring on it an open structure. The RuvB hexamer acts as an ATP-dependent pump, pulling dsDNA into and through the RuvAB complex. RuvB forms 2 homohexamers on either side of HJ DNA bound by 1 or 2 RuvA tetramers; 4 subunits per hexamer contact DNA at a time. Coordinated motions by a converter formed by DNA-disengaged RuvB subunits stimulates ATP hydrolysis and nucleotide exchange. Immobilization of the converter enables RuvB to convert the ATP-contained energy into a lever motion, pulling 2 nucleotides of DNA out of the RuvA tetramer per ATP hydrolyzed, thus driving DNA branch migration. The RuvB motors rotate together with the DNA substrate, which together with the progressing nucleotide cycle form the mechanistic basis for DNA recombination by continuous HJ branch migration. Branch migration allows RuvC to scan DNA until it finds its consensus sequence, where it cleaves and resolves cruciform DNA. The protein is Holliday junction branch migration complex subunit RuvB of Xylella fastidiosa (strain Temecula1 / ATCC 700964).